The following is a 100-amino-acid chain: Aspartyl/glutamyl-tRNA(Asn/Gln) amidotransferase subunit C (100 aa).

It belongs to the GatC family. As to quaternary structure, heterotrimer of A, B and C subunits.

The catalysed reaction is L-glutamyl-tRNA(Gln) + L-glutamine + ATP + H2O = L-glutaminyl-tRNA(Gln) + L-glutamate + ADP + phosphate + H(+). It carries out the reaction L-aspartyl-tRNA(Asn) + L-glutamine + ATP + H2O = L-asparaginyl-tRNA(Asn) + L-glutamate + ADP + phosphate + 2 H(+). Allows the formation of correctly charged Asn-tRNA(Asn) or Gln-tRNA(Gln) through the transamidation of misacylated Asp-tRNA(Asn) or Glu-tRNA(Gln) in organisms which lack either or both of asparaginyl-tRNA or glutaminyl-tRNA synthetases. The reaction takes place in the presence of glutamine and ATP through an activated phospho-Asp-tRNA(Asn) or phospho-Glu-tRNA(Gln). The polypeptide is Aspartyl/glutamyl-tRNA(Asn/Gln) amidotransferase subunit C (Herminiimonas arsenicoxydans).